The sequence spans 82 residues: Cortexin-1 (82 aa).

Residues 1–20 are disordered; the sequence is MSAPWTLSPEPLPPSTGPPV. A helical transmembrane segment spans residues 30–50; the sequence is TVFAFVLCLLVVLVLLMVRCV.

This sequence belongs to the cortexin family. As to expression, neuron specific.

The protein localises to the membrane. Its function is as follows. May mediate extracellular or intracellular signaling of cortical neurons during forebrain development. In Rattus norvegicus (Rat), this protein is Cortexin-1 (Ctxn1).